Consider the following 373-residue polypeptide: Flagellar P-ring protein (373 aa).

The first 30 residues, 1-30 (MTNRWSFDVKKNLVTLILTWLCLSISTAQA), serve as a signal peptide directing secretion.

Belongs to the FlgI family. The basal body constitutes a major portion of the flagellar organelle and consists of four rings (L,P,S, and M) mounted on a central rod.

Its subcellular location is the periplasm. It localises to the bacterial flagellum basal body. Its function is as follows. Assembles around the rod to form the L-ring and probably protects the motor/basal body from shearing forces during rotation. In Aliivibrio salmonicida (strain LFI1238) (Vibrio salmonicida (strain LFI1238)), this protein is Flagellar P-ring protein.